The following is a 315-amino-acid chain: Spermidine synthase 1 (315 aa).

The 238-residue stretch at 25-262 folds into the PABS domain; that stretch reads PGWFSEISPL…GMIGFMLCST (238 aa). Q56 is a binding site for S-adenosyl 3-(methylsulfanyl)propylamine. Y86 is a binding site for putrescine. Residues Q87, D111, E131, 162-163, and D181 each bind S-adenosyl 3-(methylsulfanyl)propylamine; that span reads DG. The active-site Proton acceptor is D181. Putrescine contacts are provided by residues 181–184 and Y250; that span reads DSSD.

Belongs to the spermidine/spermine synthase family.

The catalysed reaction is S-adenosyl 3-(methylsulfanyl)propylamine + putrescine = S-methyl-5'-thioadenosine + spermidine + H(+). The protein operates within amine and polyamine biosynthesis; spermidine biosynthesis; spermidine from putrescine: step 1/1. This Hyoscyamus niger (Black henbane) protein is Spermidine synthase 1.